A 236-amino-acid chain; its full sequence is MTNLLEASIEQAGYTSRKKVLTDVFLEVRKGELVGLIGANGAGKSTAIKAILGLSEDFKGHIAWNDCSFAYIPEHPSFYEELTLWEHLDLISTLHGIEESEFAHRAQSLLQTFSLDHVKHELPVTFSKGMQQKLMLIQAFLSKPDMYVIDEPFIGLDPISTKRFVDMLKAEKERGAGILMCTHVLDTAEKICDRFYMIEKGSLFLQGTLKDVQDKTGLEGQSLLDCFYKAVQGDRL.

Residues Leu-4–Asp-225 form the ABC transporter domain. Gly-38–Ser-45 provides a ligand contact to ATP.

It belongs to the ABC transporter superfamily.

This is an uncharacterized protein from Bacillus subtilis (strain 168).